The primary structure comprises 189 residues: Interferon alpha-1 (189 aa).

Residues 1–23 (MAPAWSLLLALLLLSCNAICSLG) form the signal peptide. Intrachain disulfides connect cysteine 24/cysteine 122 and cysteine 52/cysteine 162.

Belongs to the alpha/beta interferon family. As to quaternary structure, interacts with CR2.

The protein localises to the secreted. Produced by macrophages, IFN-alpha have antiviral activities. Interferon stimulates the production of two enzymes: a protein kinase and an oligoadenylate synthetase. The sequence is that of Interferon alpha-1 from Bos taurus (Bovine).